The primary structure comprises 82 residues: U-actitoxin-Oulsp2 (82 aa).

Residues 1–21 form the signal peptide; it reads MNTKLVVVFLLSAILFVSVTA. Residues 22–46 constitute a propeptide that is removed on maturation; sequence SRPGKDLERDEAYETYDDERPYFKR. The ShKT domain maps to 48–82; that stretch reads CKDNLPAATCSNVKANNNCSSEKYKTNCAKTCGEC. Disulfide bonds link Cys-48–Cys-82, Cys-57–Cys-75, and Cys-66–Cys-79. A theoritically crucial for binding to potassium channels region spans residues 70 to 71; sequence KY.

The protein belongs to the sea anemone type 1 potassium channel toxin family. Type 1b subfamily.

The protein localises to the secreted. It is found in the nematocyst. Its function is as follows. Probable toxin with unknown function. In contrast to similar toxins, this toxin does not inhibit voltage-gated potassium channels (tested at 100 nM). Does not show antimicrobial activities against bacteria and yeasts. The chain is U-actitoxin-Oulsp2 from Oulactis sp. (Sea anemone).